A 319-amino-acid polypeptide reads, in one-letter code: 7-methylguanosine phosphate-specific 5'-nucleotidase (319 aa).

The active-site Nucleophile is Asp-55. Mg(2+)-binding residues include Asp-55 and Asp-57. Asp-57 functions as the Proton donor in the catalytic mechanism. Glu-103 contributes to the CMP binding site. Residues Glu-103 and Ser-124 each coordinate N(7)-methyl-GMP. Position 171 to 172 (171 to 172 (SA)) interacts with substrate. Asp-245 is a Mg(2+) binding site.

The protein belongs to the pyrimidine 5'-nucleotidase family. As to quaternary structure, monomer. Mg(2+) serves as cofactor.

It catalyses the reaction N(7)-methyl-GMP + H2O = N(7)-methylguanosine + phosphate. The catalysed reaction is CMP + H2O = cytidine + phosphate. It carries out the reaction a ribonucleoside 5'-phosphate + H2O = a ribonucleoside + phosphate. With respect to regulation, inhibited by high levels of AMP. Its function is as follows. Specifically hydrolyzes 7-methylguanosine monophosphate (m(7)GMP) to 7-methylguanosine and inorganic phosphate. Also able to mediate hydrolysis of diphosphate (m(7)GDP) to 7-methylguanosine and 2 inorganic phosphate with lower activity. The specific activity for m(7)GMP may protect cells against undesired salvage of m(7)GMP and its incorporation into nucleic acids. Also has weak activity for CMP. UMP and purine nucleotides are poor substrates. This is 7-methylguanosine phosphate-specific 5'-nucleotidase from Drosophila melanogaster (Fruit fly).